The chain runs to 104 residues: Flagellar hook-basal body complex protein FliE (104 aa).

The protein belongs to the FliE family.

The protein localises to the bacterial flagellum basal body. In Pectobacterium atrosepticum (strain SCRI 1043 / ATCC BAA-672) (Erwinia carotovora subsp. atroseptica), this protein is Flagellar hook-basal body complex protein FliE.